A 230-amino-acid polypeptide reads, in one-letter code: 3-dehydroquinate dehydratase (230 aa).

3-dehydroquinate-binding positions include Ser-26, 51-53 (EIR), and Arg-84. His-127 acts as the Proton donor/acceptor in catalysis. Lys-150 functions as the Schiff-base intermediate with substrate in the catalytic mechanism. 3-dehydroquinate contacts are provided by Arg-190, Thr-209, and Gln-213.

The protein belongs to the type-I 3-dehydroquinase family. Homodimer.

The enzyme catalyses 3-dehydroquinate = 3-dehydroshikimate + H2O. It participates in metabolic intermediate biosynthesis; chorismate biosynthesis; chorismate from D-erythrose 4-phosphate and phosphoenolpyruvate: step 3/7. In terms of biological role, involved in the third step of the chorismate pathway, which leads to the biosynthesis of aromatic amino acids. Catalyzes the cis-dehydration of 3-dehydroquinate (DHQ) and introduces the first double bond of the aromatic ring to yield 3-dehydroshikimate. The protein is 3-dehydroquinate dehydratase of Thermoplasma volcanium (strain ATCC 51530 / DSM 4299 / JCM 9571 / NBRC 15438 / GSS1).